The chain runs to 173 residues: Adenine phosphoribosyltransferase (173 aa).

Belongs to the purine/pyrimidine phosphoribosyltransferase family. As to quaternary structure, homodimer.

Its subcellular location is the cytoplasm. The catalysed reaction is AMP + diphosphate = 5-phospho-alpha-D-ribose 1-diphosphate + adenine. Its pathway is purine metabolism; AMP biosynthesis via salvage pathway; AMP from adenine: step 1/1. Functionally, catalyzes a salvage reaction resulting in the formation of AMP, that is energically less costly than de novo synthesis. This Listeria monocytogenes serovar 1/2a (strain ATCC BAA-679 / EGD-e) protein is Adenine phosphoribosyltransferase.